A 109-amino-acid polypeptide reads, in one-letter code: Putative transposase MJ0856.1 (109 aa).

Residues Cys-36, Cys-39, Cys-62, and Cys-65 each contribute to the Zn(2+) site.

Belongs to the transposase 35 family.

The protein is Putative transposase MJ0856.1 of Methanocaldococcus jannaschii (strain ATCC 43067 / DSM 2661 / JAL-1 / JCM 10045 / NBRC 100440) (Methanococcus jannaschii).